Consider the following 172-residue polypeptide: Cytidylate kinase (172 aa).

8 to 16 (GPPGSGKST) provides a ligand contact to ATP.

This sequence belongs to the cytidylate kinase family. Type 2 subfamily.

It is found in the cytoplasm. It carries out the reaction CMP + ATP = CDP + ADP. The catalysed reaction is dCMP + ATP = dCDP + ADP. This chain is Cytidylate kinase, found in Ignicoccus hospitalis (strain KIN4/I / DSM 18386 / JCM 14125).